A 149-amino-acid chain; its full sequence is UPF0260 protein PFLU_1520 (149 aa).

Belongs to the UPF0260 family.

In Pseudomonas fluorescens (strain SBW25), this protein is UPF0260 protein PFLU_1520.